We begin with the raw amino-acid sequence, 342 residues long: Alpha-(1,3)-fucosyltransferase 7 (342 aa).

Over 1–14 (MNNAGHGPTRRLRG) the chain is Cytoplasmic. The helical; Signal-anchor for type II membrane protein transmembrane segment at 15–36 (LGVLAGVALLAALWLLWLLGSA) threads the bilayer. Residues 37–342 (PRGTPAPQPT…YEDLEGWFQA (306 aa)) are Lumenal-facing. Cysteines 68 and 76 form a disulfide. Asparagine 81 carries an N-linked (GlcNAc...) asparagine glycan. A disulfide bridge links cysteine 211 with cysteine 214. Asparagine 291 is a glycosylation site (N-linked (GlcNAc...) asparagine). Cysteine 318 and cysteine 321 are oxidised to a cystine.

It belongs to the glycosyltransferase 10 family. N-glycosylated. Leukocytic/myeloid lineage cells.

Its subcellular location is the golgi apparatus. It localises to the golgi stack membrane. It carries out the reaction an N-acetyl-alpha-neuraminyl-(2-&gt;3)-beta-D-galactosyl-(1-&gt;4)-N-acetyl-beta-D-glucosaminyl derivative + GDP-beta-L-fucose = an alpha-Neu5Ac-(2-&gt;3)-beta-D-Gal-(1-&gt;4)-[alpha-L-Fuc-(1-&gt;3)]-beta-D-GlcNAc derivative + GDP + H(+). The catalysed reaction is a neolactoside IV(3)-alpha-NeuAc-nLc4Cer + GDP-beta-L-fucose = a neolactoside IV(3)-alpha-NeuNAc,III(3)-alpha-Fuc-nLc4Cer + GDP + H(+). It catalyses the reaction a neolactoside VI(3)-alpha-NeuNAc-nLc6Cer + GDP-beta-L-fucose = a neolactoside VI(3)-alpha-NeuAc,V(3)-alphaFuc-nLc6Cer + GDP + H(+). The enzyme catalyses an alpha-Neu5Ac-(2-&gt;3)-beta-D-Gal-(1-&gt;4)-beta-D-GlcNAc-(1-&gt;3)-beta-D-Gal-(1-&gt;4)-[alpha-L-Fuc-(1-&gt;3)]-beta-D-GlcNAc derivative + GDP-beta-L-fucose = an alpha-Neu5Ac-(2-&gt;3)-beta-D-Gal-(1-&gt;4)-[alpha-L-Fuc-(1-&gt;3)]-beta-D-GlcNAc-(1-&gt;3)-beta-D-Gal-(1-&gt;4)-[alpha-L-Fuc-(1-&gt;3)]-beta-D-GlcNAc derivative + GDP + H(+). It carries out the reaction an alpha-Neu5Ac-(2-&gt;3)-beta-D-Gal-(1-&gt;4)-beta-D-GlcNAc6S derivative + GDP-beta-L-fucose = an alpha-Neu5Ac-(2-&gt;3)-beta-D-Gal-(1-&gt;4)-[alpha-L-Fuc-(1-&gt;3)]-beta-D-GlcNAc6S derivative + GDP + H(+). The catalysed reaction is alpha-Neu5Ac-(2-&gt;3)-beta-D-Gal-(1-&gt;4)-beta-D-GlcNAc-(1-&gt;3)-beta-D-Gal-(1-&gt;4)-D-Glc + GDP-beta-L-fucose = alpha-Neu5Ac-(2-&gt;3)-beta-D-Gal-(1-&gt;4)-[alpha-L-Fuc-(1-&gt;3)]-beta-D-GlcNAc-(1-&gt;3)-beta-D-Gal-(1-&gt;4)-D-Glc + GDP + H(+). It catalyses the reaction alpha-Neu5Ac-(2-&gt;3)-beta-D-Gal-(1-&gt;4)-beta-D-GlcNAc-(1-&gt;3)-beta-D-Gal-(1-&gt;4)-[alpha-L-Fuc-(1-&gt;3)]-beta-D-GlcNAc-(1-&gt;3)-beta-D-Gal-(1-&gt;4)-beta-D-GlcNAc + GDP-beta-L-fucose = alpha-Neu5Ac-(2-&gt;3)-beta-D-Gal-(1-&gt;4)-[alpha-L-Fuc-(1-&gt;3)]-beta-D-GlcNAc-(1-&gt;3)-beta-D-Gal-(1-&gt;4)-[alpha-L-Fuc-(1-&gt;3)]-beta-D-GlcNAc-(1-&gt;3)-beta-D-Gal-(1-&gt;4)-beta-D-GlcNAc + GDP + H(+). The enzyme catalyses alpha-Neu5Ac-(2-&gt;3)-beta-D-Gal-(1-&gt;4)-beta-D-GlcNAc-(1-&gt;3)-beta-D-Gal-(1-&gt;4)-beta-D-GlcNAc-(1-&gt;3)-beta-D-Gal-(1-&gt;4)-beta-D-GlcNAc + GDP-beta-L-fucose = alpha-Neu5Ac-(2-&gt;3)-beta-D-Gal-(1-&gt;4)-[alpha-L-Fuc-(1-&gt;3)]-beta-D-GlcNAc-(1-&gt;3)-beta-D-Gal-(1-&gt;4)-beta-D-GlcNAc-(1-&gt;3)-beta-D-Gal-(1-&gt;4)-beta-D-GlcNAc + GDP + H(+). The protein operates within protein modification; protein glycosylation. Its activity is regulated as follows. Inhibited by NaCl. Inhibited by GDP in a concentration dependent manner, with an IC(50) value of 93 uM. Also inhibited by GMP and GTP. Inhibited by N-ethylmaleimide. Activated by poly(ethylene glycol) by enhancing the thermal stability of FUT7. Activated by Mn2+, Ca2+, and Mg2+. Both panosialin A and B inhibit activity with IC(50) values of 4.8 and 5.3 ug/ml, respectively. Inhibited by gallic acid (GA) and (-)-epigallocatechin gallate (EGCG) in a time-dependent and irreversible manner with IC(50) values of 60 and 700 nM, respectively. Catalyzes the transfer of L-fucose, from a guanosine diphosphate-beta-L-fucose, to the N-acetyl glucosamine (GlcNAc) of a distal alpha2,3 sialylated lactosamine unit of a glycoprotein or a glycolipid-linked sialopolylactosamines chain through an alpha-1,3 glycosidic linkage and participates in the final fucosylation step in the biosynthesis of the sialyl Lewis X (sLe(x)), a carbohydrate involved in cell and matrix adhesion during leukocyte trafficking and fertilization. In vitro, also synthesizes sialyl-dimeric-Lex structures, from VIM-2 structures and both di-fucosylated and trifucosylated structures from mono-fucosylated precursors. However does not catalyze alpha 1-3 fucosylation when an internal alpha 1-3 fucosylation is present in polylactosamine chain and the fucosylation rate of the internal GlcNAc residues is reduced once fucose has been added to the distal GlcNAc. Also catalyzes the transfer of a fucose from GDP-beta-fucose to the 6-sulfated a(2,3)sialylated substrate to produce 6-sulfo sLex mediating significant L-selectin-dependent cell adhesion. Through sialyl-Lewis(x) biosynthesis, can control SELE- and SELP-mediated cell adhesion with leukocytes and allows leukocytes tethering and rolling along the endothelial tissue thereby enabling the leukocytes to accumulate at a site of inflammation. May enhance embryo implantation through sialyl Lewis X (sLeX)-mediated adhesion of embryo cells to endometrium. May affect insulin signaling by up-regulating the phosphorylation and expression of some signaling molecules involved in the insulin-signaling pathway through SLe(x) which is present on the glycans of the INSRR alpha subunit. The polypeptide is Alpha-(1,3)-fucosyltransferase 7 (Homo sapiens (Human)).